The sequence spans 616 residues: MPKYRSATTTHGRNMAGARALWRATGMTDADFGKPIIAVVNSFTQFVPGHVHLRDLGKLVAEQIEASGGVAKEFNTIAVDDGIAMGHGGMLYSLPSRELIADSVEYMVNAHCADAMVCISNCDKITPGMLMAALRLNIPAIFVSGGPMEAGKTKLSDQIIKLDLIDAMIQGANPKVSDEDSNQIERSACPTCGSCSGMFTANSMNCLTEALGLSQPGNGSLLATHADRKALFLNAGKRIVELTKRYYEQNDDSALPRSIATKAAFENAMMLDIAMGGSTNTVLHLLAAAQEGEVDFTMADIDRLSRQIPHLCKVAPSTQKYHMEDVHRAGGVIGILGELDRAGLLNRQVKNVLGLDLLQTLNQYDVMQTVDESVKEMYSAGPAGIRTTQAFSQDCRWPSLDTDRVEGCIRDIEHAYSRDGGLAVLFGNLAIDGCIVKTAGVDEGSLTFRGPAKVYESQEDAVDAILGGKVVAGDVVVIRYEGPKGGPGMQEMLYPTTYLKSVGLGKSCALITDGRFSGGTSGLSIGHVSPEAANGGLIGLVQDGDIIDIDIPLRKIRLDVDERILATRKEVEFARGDKSWTPKARERQVSLALRAYASLATSADKGAVRDKSKLGG.

Residue aspartate 81 coordinates Mg(2+). [2Fe-2S] cluster is bound at residue cysteine 122. The Mg(2+) site is built by aspartate 123 and lysine 124. Lysine 124 bears the N6-carboxylysine mark. Cysteine 195 contributes to the [2Fe-2S] cluster binding site. Glutamate 491 contacts Mg(2+). Serine 517 acts as the Proton acceptor in catalysis.

The protein belongs to the IlvD/Edd family. As to quaternary structure, homodimer. Requires [2Fe-2S] cluster as cofactor. It depends on Mg(2+) as a cofactor.

It catalyses the reaction (2R)-2,3-dihydroxy-3-methylbutanoate = 3-methyl-2-oxobutanoate + H2O. It carries out the reaction (2R,3R)-2,3-dihydroxy-3-methylpentanoate = (S)-3-methyl-2-oxopentanoate + H2O. The protein operates within amino-acid biosynthesis; L-isoleucine biosynthesis; L-isoleucine from 2-oxobutanoate: step 3/4. It participates in amino-acid biosynthesis; L-valine biosynthesis; L-valine from pyruvate: step 3/4. In terms of biological role, functions in the biosynthesis of branched-chain amino acids. Catalyzes the dehydration of (2R,3R)-2,3-dihydroxy-3-methylpentanoate (2,3-dihydroxy-3-methylvalerate) into 2-oxo-3-methylpentanoate (2-oxo-3-methylvalerate) and of (2R)-2,3-dihydroxy-3-methylbutanoate (2,3-dihydroxyisovalerate) into 2-oxo-3-methylbutanoate (2-oxoisovalerate), the penultimate precursor to L-isoleucine and L-valine, respectively. This chain is Dihydroxy-acid dehydratase, found in Photorhabdus laumondii subsp. laumondii (strain DSM 15139 / CIP 105565 / TT01) (Photorhabdus luminescens subsp. laumondii).